The sequence spans 620 residues: UDP-glucose:protein N-beta-glucosyltransferase (620 aa).

Belongs to the glycosyltransferase 41 family. Does not require a metal cofactor. is required as a cofactor.

The protein localises to the cytoplasm. It catalyses the reaction L-asparaginyl-[protein] + UDP-alpha-D-glucose = N(4)-(beta-D-glucosyl)-L-asparaginyl-[protein] + UDP + H(+). It functions in the pathway protein modification; protein glycosylation. Functionally, inverting glycosyltransferase that catalyzes the transfer of one glucose moiety from UDP-glucose to an asparagine residue in peptides and proteins containing the NX(S/T) motif, resulting in their modification with a beta-linked 1,N-glucose. Likely acts as a key component of a general protein glycosylation system. Also accepts UDP-galactose as a substrate donor, albeit with low efficiency. Cannot use UDP-GlcNAc or UDP-GalNAc as substrate donor. The polypeptide is UDP-glucose:protein N-beta-glucosyltransferase (Actinobacillus pleuropneumoniae serotype 7 (strain AP76)).